The primary structure comprises 193 residues: 2',3'-cyclic-nucleotide 3'-phosphodiesterase (193 aa).

The active-site Proton donor/acceptor is H40. A substrate-binding site is contributed by T42. Residue H129 is the Proton donor/acceptor of the active site. Residues S131 and Y134 each contribute to the substrate site.

Belongs to the 2H phosphoesterase superfamily. CPD1 family.

It is found in the golgi apparatus. The enzyme catalyses a nucleoside 2',3'-cyclic phosphate + H2O = a nucleoside 2'-phosphate + H(+). Involved in the metabolism of ADP-ribose 1',2'-cyclic phosphate which is produced as a consequence of tRNA splicing. This chain is 2',3'-cyclic-nucleotide 3'-phosphodiesterase (CPD1), found in Phaeosphaeria nodorum (strain SN15 / ATCC MYA-4574 / FGSC 10173) (Glume blotch fungus).